Reading from the N-terminus, the 164-residue chain is MSQSICSTGLRWLWLVVVVLIIDLGSKYLILQNFALGDTVPLFPSLNLHYARNYGAAFSFLADSGGWQRWFFAGIAIGISVLLAVMMYRSKATQKLNNIAYALIIGGALGNLFDRLWHGFVVDMIDFYVGDWHFATFNLADTAICVGAALIVLEGFLPSKAKKQ.

The next 3 membrane-spanning stretches (helical) occupy residues tryptophan 12–glutamine 32, tryptophan 70–serine 90, and alanine 102–valine 122. Residues aspartate 123 and aspartate 141 contribute to the active site. A helical transmembrane segment spans residues phenylalanine 137–leucine 157.

This sequence belongs to the peptidase A8 family.

It is found in the cell inner membrane. The enzyme catalyses Release of signal peptides from bacterial membrane prolipoproteins. Hydrolyzes -Xaa-Yaa-Zaa-|-(S,diacylglyceryl)Cys-, in which Xaa is hydrophobic (preferably Leu), and Yaa (Ala or Ser) and Zaa (Gly or Ala) have small, neutral side chains.. It functions in the pathway protein modification; lipoprotein biosynthesis (signal peptide cleavage). Its function is as follows. This protein specifically catalyzes the removal of signal peptides from prolipoproteins. The protein is Lipoprotein signal peptidase of Shigella flexneri.